The following is a 264-amino-acid chain: Thiazole synthase (264 aa).

Lys-106 acts as the Schiff-base intermediate with DXP in catalysis. Residues Gly-167, 193 to 194, and 215 to 216 contribute to the 1-deoxy-D-xylulose 5-phosphate site; these read AG and NT.

This sequence belongs to the ThiG family. In terms of assembly, homotetramer. Forms heterodimers with either ThiH or ThiS.

The protein resides in the cytoplasm. The enzyme catalyses [ThiS sulfur-carrier protein]-C-terminal-Gly-aminoethanethioate + 2-iminoacetate + 1-deoxy-D-xylulose 5-phosphate = [ThiS sulfur-carrier protein]-C-terminal Gly-Gly + 2-[(2R,5Z)-2-carboxy-4-methylthiazol-5(2H)-ylidene]ethyl phosphate + 2 H2O + H(+). It functions in the pathway cofactor biosynthesis; thiamine diphosphate biosynthesis. Catalyzes the rearrangement of 1-deoxy-D-xylulose 5-phosphate (DXP) to produce the thiazole phosphate moiety of thiamine. Sulfur is provided by the thiocarboxylate moiety of the carrier protein ThiS. In vitro, sulfur can be provided by H(2)S. The sequence is that of Thiazole synthase from Xanthomonas axonopodis pv. citri (strain 306).